We begin with the raw amino-acid sequence, 463 residues long: Chromosomal replication initiator protein DnaA (463 aa).

Positions 1 to 83 are domain I, interacts with DnaA modulators; it reads MSTNQIILTD…LQLFQHYNNT (83 aa). The domain II stretch occupies residues 83-124; sequence TIKSVEIITKELPGTSKTVIELPTKTFADIGSSELNAENIFS. Positions 125–343 are domain III, AAA+ region; the sequence is TLDVRFTFDN…GALNKVIAHS (219 aa). ATP is bound by residues Gly171, Gly173, Lys174, and Thr175. The domain IV, binds dsDNA stretch occupies residues 344-463; sequence NFTLKEITLE…INLLMKILQN (120 aa).

This sequence belongs to the DnaA family. Oligomerizes as a right-handed, spiral filament on DNA at oriC.

The protein localises to the cytoplasm. Plays an essential role in the initiation and regulation of chromosomal replication. ATP-DnaA binds to the origin of replication (oriC) to initiate formation of the DNA replication initiation complex once per cell cycle. Binds the DnaA box (a 9 base pair repeat at the origin) and separates the double-stranded (ds)DNA. Forms a right-handed helical filament on oriC DNA; dsDNA binds to the exterior of the filament while single-stranded (ss)DNA is stabiized in the filament's interior. The ATP-DnaA-oriC complex binds and stabilizes one strand of the AT-rich DNA unwinding element (DUE), permitting loading of DNA polymerase. After initiation quickly degrades to an ADP-DnaA complex that is not apt for DNA replication. Binds acidic phospholipids. The polypeptide is Chromosomal replication initiator protein DnaA (Rickettsia canadensis (strain McKiel)).